The sequence spans 374 residues: DNA replication and repair protein RecF (374 aa).

30–37 (GHNAQGKT) serves as a coordination point for ATP.

This sequence belongs to the RecF family.

It is found in the cytoplasm. Functionally, the RecF protein is involved in DNA metabolism; it is required for DNA replication and normal SOS inducibility. RecF binds preferentially to single-stranded, linear DNA. It also seems to bind ATP. This Limosilactobacillus reuteri (strain DSM 20016) (Lactobacillus reuteri) protein is DNA replication and repair protein RecF.